A 504-amino-acid chain; its full sequence is Maturase K (504 aa).

This sequence belongs to the intron maturase 2 family. MatK subfamily.

Its subcellular location is the plastid. The protein resides in the chloroplast. Usually encoded in the trnK tRNA gene intron. Probably assists in splicing its own and other chloroplast group II introns. This is Maturase K from Taxus baccata (English yew).